The chain runs to 96 residues: Neutrophil defensin 1 (96 aa).

A signal peptide spans 1-19 (MRTLVILAAILLVALQAQA). A propeptide spanning residues 20 to 66 (EPLQARTDEATAAQEQIPTDNPEVVVSLAWDESLAPKDSVPGLRKNM) is cleaved from the precursor. Cystine bridges form between C68/C96, C70/C85, and C75/C95. At Y87 the chain carries Phosphotyrosine.

Tetramer. Dimer. Interacts with RETN. In terms of processing, ADP-ribosylation drastically reduces cytotoxic and antibacterial activities, and enhances IL8 production.

It is found in the secreted. Effector molecule of the innate immune system that acts via antibiotic-like properties against a broad array of infectious agents including bacteria, fungi, and viruses or by promoting the activation and maturation of some APCs. Interacts with the essential precursor of cell wall synthesis lipid II to inhibit bacterial cell wall synthesis. Inhibits adenovirus infection via inhibition of viral disassembly at the vertex region, thereby restricting the release of internal capsid protein pVI, which is required for endosomal membrane penetration during cell entry. In addition, interaction with adenovirus capsid leads to the redirection of viral particles to TLR4 thereby promoting a NLRP3-mediated inflammasome response and interleukin 1-beta (IL-1beta) release. Induces the production of proinflammatory cytokines including type I interferon (IFN) in plasmacytoid dendritic cells (pDCs) by triggering the degradation of NFKBIA and nuclear translocation of IRF1, both of which are required for activation of pDCs. The protein is Neutrophil defensin 1 of Macaca mulatta (Rhesus macaque).